The sequence spans 384 residues: Dual-specificity RNA methyltransferase RlmN (384 aa).

The active-site Proton acceptor is glutamate 93. One can recognise a Radical SAM core domain in the interval 99 to 339; that stretch reads EDTRGTLCVS…TTIRKTRGDD (241 aa). The cysteines at positions 106 and 344 are disulfide-linked. Cysteine 113, cysteine 117, and cysteine 120 together coordinate [4Fe-4S] cluster. Residues 170–171, serine 202, 224–226, and asparagine 301 each bind S-adenosyl-L-methionine; these read GE and SLH. The S-methylcysteine intermediate role is filled by cysteine 344.

It belongs to the radical SAM superfamily. RlmN family. The cofactor is [4Fe-4S] cluster.

It localises to the cytoplasm. It carries out the reaction adenosine(2503) in 23S rRNA + 2 reduced [2Fe-2S]-[ferredoxin] + 2 S-adenosyl-L-methionine = 2-methyladenosine(2503) in 23S rRNA + 5'-deoxyadenosine + L-methionine + 2 oxidized [2Fe-2S]-[ferredoxin] + S-adenosyl-L-homocysteine. The enzyme catalyses adenosine(37) in tRNA + 2 reduced [2Fe-2S]-[ferredoxin] + 2 S-adenosyl-L-methionine = 2-methyladenosine(37) in tRNA + 5'-deoxyadenosine + L-methionine + 2 oxidized [2Fe-2S]-[ferredoxin] + S-adenosyl-L-homocysteine. Its function is as follows. Specifically methylates position 2 of adenine 2503 in 23S rRNA and position 2 of adenine 37 in tRNAs. m2A2503 modification seems to play a crucial role in the proofreading step occurring at the peptidyl transferase center and thus would serve to optimize ribosomal fidelity. This is Dual-specificity RNA methyltransferase RlmN from Cupriavidus metallidurans (strain ATCC 43123 / DSM 2839 / NBRC 102507 / CH34) (Ralstonia metallidurans).